The following is a 160-amino-acid chain: 6,7-dimethyl-8-ribityllumazine synthase (160 aa).

5-amino-6-(D-ribitylamino)uracil-binding positions include Trp28, 59–61, and 82–84; these read SFE and VII. 87 to 88 lines the (2S)-2-hydroxy-3-oxobutyl phosphate pocket; sequence GT. Residue His90 is the Proton donor of the active site. Phe115 contacts 5-amino-6-(D-ribitylamino)uracil. Residue Arg129 participates in (2S)-2-hydroxy-3-oxobutyl phosphate binding.

This sequence belongs to the DMRL synthase family.

The enzyme catalyses (2S)-2-hydroxy-3-oxobutyl phosphate + 5-amino-6-(D-ribitylamino)uracil = 6,7-dimethyl-8-(1-D-ribityl)lumazine + phosphate + 2 H2O + H(+). Its pathway is cofactor biosynthesis; riboflavin biosynthesis; riboflavin from 2-hydroxy-3-oxobutyl phosphate and 5-amino-6-(D-ribitylamino)uracil: step 1/2. In terms of biological role, catalyzes the formation of 6,7-dimethyl-8-ribityllumazine by condensation of 5-amino-6-(D-ribitylamino)uracil with 3,4-dihydroxy-2-butanone 4-phosphate. This is the penultimate step in the biosynthesis of riboflavin. This Clavibacter michiganensis subsp. michiganensis (strain NCPPB 382) protein is 6,7-dimethyl-8-ribityllumazine synthase.